A 345-amino-acid polypeptide reads, in one-letter code: OVARIAN TUMOR DOMAIN-containing deubiquitinating enzyme 9 (345 aa).

An OTU domain is found at 204 to 328; the sequence is LVENKIEGDG…EVHYNSIYPE (125 aa). Aspartate 212 is a catalytic residue. Cysteine 215 serves as the catalytic Nucleophile. Residue histidine 321 is part of the active site.

It belongs to the peptidase C85 family.

It carries out the reaction Thiol-dependent hydrolysis of ester, thioester, amide, peptide and isopeptide bonds formed by the C-terminal Gly of ubiquitin (a 76-residue protein attached to proteins as an intracellular targeting signal).. In terms of biological role, hydrolase that can remove conjugated ubiquitin from proteins in vitro and may therefore play an important regulatory role at the level of protein turnover by preventing degradation. Cysteine protease with a preference for 'Lys-63' and 'Lys-48' -linked ubiquitin (UB) tetramers as substrates. Also cleaves RUB-GST fusion. The protein is OVARIAN TUMOR DOMAIN-containing deubiquitinating enzyme 9 of Arabidopsis thaliana (Mouse-ear cress).